Reading from the N-terminus, the 171-residue chain is Co-chaperone protein HscB homolog (171 aa).

Residues 2-69 (NHFELFDLPV…DSRAAYLLSL (68 aa)) form the J domain.

This sequence belongs to the HscB family. In terms of assembly, interacts with HscA and stimulates its ATPase activity.

Functionally, co-chaperone involved in the maturation of iron-sulfur cluster-containing proteins. Seems to help targeting proteins to be folded toward HscA. The chain is Co-chaperone protein HscB homolog from Acinetobacter baylyi (strain ATCC 33305 / BD413 / ADP1).